A 361-amino-acid polypeptide reads, in one-letter code: Outer mitochondrial transmembrane helix translocase (361 aa).

At 1–15 (MVHAEAFSRPLSRNE) the chain is on the mitochondrial intermembrane side. Residues 16 to 32 (VVGLIFRLTIFGAVTYF) form a helical membrane-spanning segment. The Cytoplasmic portion of the chain corresponds to 33–361 (TIKWMVDAID…QSVLTHVCLD (329 aa)). An ATP-binding site is contributed by 133–140 (GPPGCGKT). The residue at position 322 (S322) is a Phosphoserine.

Belongs to the AAA ATPase family. MSP1 subfamily. In terms of assembly, interacts with GRIA2 and GRIP1 in an ATP-dependent manner. ATAD1-catalyzed ATP hydrolysis disrupts not only its binding to GRIA2 and GRIP1, but also interaction between GRIP1 and GRIA2, leading to AMPAR complex disassembly.

It is found in the mitochondrion outer membrane. It localises to the peroxisome membrane. Its subcellular location is the postsynaptic cell membrane. It catalyses the reaction [protein]-with a C-terminal TM segment(out) + ATP + H2O = [protein]-with a C-terminal TM segment(in) + ADP + phosphate + H(+). Outer mitochondrial translocase required to remove mislocalized tail-anchored transmembrane proteins on mitochondria. Specifically recognizes and binds tail-anchored transmembrane proteins: acts as a dislocase that mediates the ATP-dependent extraction of mistargeted tail-anchored transmembrane proteins from the mitochondrion outer membrane. Also plays a critical role in regulating the surface expression of AMPA receptors (AMPAR), thereby regulating synaptic plasticity and learning and memory. Required for NMDA-stimulated AMPAR internalization and inhibition of GRIA1 and GRIA2 recycling back to the plasma membrane; these activities are ATPase-dependent. The polypeptide is Outer mitochondrial transmembrane helix translocase (Rattus norvegicus (Rat)).